A 387-amino-acid chain; its full sequence is MTSILNTVSTIHSSRVTSVDRVGVLSLRNSDSVEFTRRRSGFSTLIYESPGRRFVVRAAETDTDKVKSQTPDKAPAGGSSINQLLGIKGASQETNKWKIRLQLTKPVTWPPLVWGVVCGAAASGNFHWTPEDVAKSILCMMMSGPCLTGYTQTINDWYDRDIDAINEPYRPIPSGAISEPEVITQVWVLLLGGLGIAGILDVWAGHTTPTVFYLALGGSLLSYIYSAPPLKLKQNGWVGNFALGASYISLPWWAGQALFGTLTPDVVVLTLLYSIAGLGIAIVNDFKSVEGDRALGLQSLPVAFGTETAKWICVGAIDITQLSVAGYLLASGKPYYALALVALIIPQIVFQFKYFLKDPVKYDVKYQASAQPFLVLGIFVTALASQH.

The N-terminal 57 residues, 1–57, are a transit peptide targeting the chloroplast; the sequence is MTSILNTVSTIHSSRVTSVDRVGVLSLRNSDSVEFTRRRSGFSTLIYESPGRRFVVR. The interval 62 to 81 is disordered; that stretch reads DTDKVKSQTPDKAPAGGSSI. The next 7 helical transmembrane spans lie at 182-202, 210-230, 241-261, 266-286, 311-331, 336-356, and 364-384; these read VITQ…ILDV, TVFY…APPL, FALG…LFGT, VVVL…VNDF, WICV…LLAS, YALA…KYFL, and VKYQ…TALA.

Belongs to the UbiA prenyltransferase family. Chlorophyll synthase subfamily. In terms of tissue distribution, low level in flower buds, flowers, stems, leaves, greening cotyledons and immature siliques, but not in mature siliques or seeds.

The protein localises to the plastid. It is found in the chloroplast membrane. It carries out the reaction phytyl diphosphate + chlorophyllide a + H(+) = chlorophyll a + diphosphate. It functions in the pathway porphyrin-containing compound metabolism; chlorophyll biosynthesis. Functionally, involved in one of the last steps of the biosynthesis of chlorophyll a. Catalyzes the esterification of chlorophillide a or b with a preference for geranylgeranyldiphosphate (GGPP) rather than for phytyldiphosphate (PhyPP). This chain is Chlorophyll synthase, chloroplastic (CHLG), found in Arabidopsis thaliana (Mouse-ear cress).